A 280-amino-acid polypeptide reads, in one-letter code: 2-dehydro-3-deoxyphosphooctonate aldolase (280 aa).

It belongs to the KdsA family.

The protein localises to the cytoplasm. It carries out the reaction D-arabinose 5-phosphate + phosphoenolpyruvate + H2O = 3-deoxy-alpha-D-manno-2-octulosonate-8-phosphate + phosphate. It participates in carbohydrate biosynthesis; 3-deoxy-D-manno-octulosonate biosynthesis; 3-deoxy-D-manno-octulosonate from D-ribulose 5-phosphate: step 2/3. It functions in the pathway bacterial outer membrane biogenesis; lipopolysaccharide biosynthesis. The protein is 2-dehydro-3-deoxyphosphooctonate aldolase of Neisseria meningitidis serogroup B (strain ATCC BAA-335 / MC58).